A 669-amino-acid chain; its full sequence is UvrABC system protein B (669 aa).

Positions 26-414 (TNFHAGIAKQ…AGEVIELLVR (389 aa)) constitute a Helicase ATP-binding domain. An ATP-binding site is contributed by 39–46 (GVTGSGKT). A Beta-hairpin motif is present at residues 92–115 (YYDYYQPEAYVPASDTFIEKDSSI). The region spanning 435–597 (LISQINVCIK…SVVRPISDIL (163 aa)) is the Helicase C-terminal domain. The 36-residue stretch at 631-666 (AAQMKVLEQQMYQHARDLEFEDAARIRDQIQRLREA) folds into the UVR domain.

It belongs to the UvrB family. As to quaternary structure, forms a heterotetramer with UvrA during the search for lesions. Interacts with UvrC in an incision complex.

It is found in the cytoplasm. Its function is as follows. The UvrABC repair system catalyzes the recognition and processing of DNA lesions. A damage recognition complex composed of 2 UvrA and 2 UvrB subunits scans DNA for abnormalities. Upon binding of the UvrA(2)B(2) complex to a putative damaged site, the DNA wraps around one UvrB monomer. DNA wrap is dependent on ATP binding by UvrB and probably causes local melting of the DNA helix, facilitating insertion of UvrB beta-hairpin between the DNA strands. Then UvrB probes one DNA strand for the presence of a lesion. If a lesion is found the UvrA subunits dissociate and the UvrB-DNA preincision complex is formed. This complex is subsequently bound by UvrC and the second UvrB is released. If no lesion is found, the DNA wraps around the other UvrB subunit that will check the other stand for damage. In Xylella fastidiosa (strain 9a5c), this protein is UvrABC system protein B.